The chain runs to 707 residues: Anaerobic ribonucleoside-triphosphate reductase (707 aa).

The region spanning 4-95 (FGVIKRDGSR…EYRHDRDLAR (92 aa)) is the ATP-cone domain. The Glycine radical domain occupies 584-707 (KKVNPYDKLD…EEVKRRVKHL (124 aa)). Residues Cys645, Cys648, Cys663, and Cys666 each contribute to the Zn(2+) site. A Glycine radical modification is found at Gly682.

The protein belongs to the anaerobic ribonucleoside-triphosphate reductase family. Forms a tetramer composed of two NrdD and two NrdG subunits.

The catalysed reaction is a ribonucleoside 5'-triphosphate + formate + H(+) = a 2'-deoxyribonucleoside 5'-triphosphate + CO2 + H2O. Activated under anaerobic conditions by NrdG, a tightly associated activase. Activation involves the formation of a glycyl radical at Gly-682. In terms of biological role, catalyzes the conversion of ribonucleotides into deoxyribonucleotides, which are required for DNA synthesis and repair. This is Anaerobic ribonucleoside-triphosphate reductase (nrdD) from Haemophilus influenzae (strain ATCC 51907 / DSM 11121 / KW20 / Rd).